Here is a 409-residue protein sequence, read N- to C-terminus: FBD-associated F-box protein At4g10400 (409 aa).

The F-box domain maps to 1 to 47 (MDRISGLPDEVLVKILSFVPTKVAVSTSILSKRWEFLWMWLTKLKFG). An FBD domain is found at 330–379 (SWNQPSIVPECMLSSLQKFTWFKYLGRPQDRDIAVYILKNACRLRTATIK).

This is FBD-associated F-box protein At4g10400 from Arabidopsis thaliana (Mouse-ear cress).